The sequence spans 185 residues: Jasmonate-induced protein homolog (185 aa).

This sequence belongs to the jasmonate-induced protein family.

This is Jasmonate-induced protein homolog from Atriplex canescens (Fourwing saltbush).